Here is a 119-residue protein sequence, read N- to C-terminus: Large ribosomal subunit protein bL20 (119 aa).

This sequence belongs to the bacterial ribosomal protein bL20 family.

Binds directly to 23S ribosomal RNA and is necessary for the in vitro assembly process of the 50S ribosomal subunit. It is not involved in the protein synthesizing functions of that subunit. This Dichelobacter nodosus (strain VCS1703A) protein is Large ribosomal subunit protein bL20.